The following is a 517-amino-acid chain: MFS efflux transporter inpD (517 aa).

The tract at residues 1 to 24 (MEKTQTPSLTPDELSARSSTPFEE) is disordered. 5 helical membrane passes run 37–57 (LKFS…ALSL), 59–79 (DIGW…LVFG), 89–109 (IVYL…ATAP), 112–132 (IALI…LSGA), and 151–171 (ILGA…GGII). Asn-172 carries N-linked (GlcNAc...) asparagine glycosylation. The next 9 membrane-spanning stretches (helical) occupy residues 178–198 (WIFY…VFLL), 219–239 (LPAF…LLWG), 247–267 (NARI…FMLV), 292–312 (FFSF…PIWL), 328–348 (LPII…TPVI), 352–372 (VPFM…LSTL), 381–401 (VLGF…QTLV), 412–432 (IPIG…IALS), and 485–505 (AIVK…IGVL).

This sequence belongs to the major facilitator superfamily.

It localises to the cell membrane. MFS efflux transporter; part of the inp gene cluster that mediates the biosynthesis of fellutamide B, a mycotoxin that acts as a proteasome inhibitor. In the first step of fellutabmide B biosynthesis inpC activates 3-hydroxydodecanoic acid to generate 3-hydroxydodecanoyl-AMP that is then loaded onto the T0 domain of inpB. The 3-hydroxydodecanoyl-S-phosphopantetheinyl-T0 is sequentially extended with L-Asn and L-Gln by the two CAT modules of inpB. The linear lipodipeptide from inpB is then transferred onto inpA for the addition of the third amino acid, L-Leu. Reductive releasing of the lipotripeptide by the TE domain of inpA produces (2S)-fellutamide B. InpF might be involved in the release and transfer of the lipodipeptide from inpB to inpA. The inp cluster-encoded proteasome subunit inpE confers resistance to internally produced fellutamides. The MFS efflux transporter inpD may contribute to fellutamide resistance as well. In Emericella nidulans (strain FGSC A4 / ATCC 38163 / CBS 112.46 / NRRL 194 / M139) (Aspergillus nidulans), this protein is MFS efflux transporter inpD.